The following is a 608-amino-acid chain: Chaperone protein HtpG (608 aa).

The a; substrate-binding stretch occupies residues 1–332; that stretch reads MQFQTEVNQL…VEDLPLNVSR (332 aa). The interval 333-536 is b; the sequence is EILQENQILK…KNKPDFAMQQ (204 aa). The c stretch occupies residues 537–608; that stretch reads LLKQMGQEQN…LTKIINKAFS (72 aa).

Belongs to the heat shock protein 90 family. In terms of assembly, homodimer.

It localises to the cytoplasm. Its function is as follows. Molecular chaperone. Has ATPase activity. This is Chaperone protein HtpG from Campylobacter jejuni subsp. jejuni serotype O:23/36 (strain 81-176).